Here is a 427-residue protein sequence, read N- to C-terminus: Serine--tRNA ligase (427 aa).

Residue 233–235 (TAE) coordinates L-serine. 264–266 (RSE) provides a ligand contact to ATP. Position 287 (E287) interacts with L-serine. Residue 351 to 354 (EISS) coordinates ATP. S387 provides a ligand contact to L-serine.

This sequence belongs to the class-II aminoacyl-tRNA synthetase family. Type-1 seryl-tRNA synthetase subfamily. In terms of assembly, homodimer. The tRNA molecule binds across the dimer.

The protein localises to the cytoplasm. The catalysed reaction is tRNA(Ser) + L-serine + ATP = L-seryl-tRNA(Ser) + AMP + diphosphate + H(+). It catalyses the reaction tRNA(Sec) + L-serine + ATP = L-seryl-tRNA(Sec) + AMP + diphosphate + H(+). It functions in the pathway aminoacyl-tRNA biosynthesis; selenocysteinyl-tRNA(Sec) biosynthesis; L-seryl-tRNA(Sec) from L-serine and tRNA(Sec): step 1/1. Its function is as follows. Catalyzes the attachment of serine to tRNA(Ser). Is also able to aminoacylate tRNA(Sec) with serine, to form the misacylated tRNA L-seryl-tRNA(Sec), which will be further converted into selenocysteinyl-tRNA(Sec). The chain is Serine--tRNA ligase from Buchnera aphidicola subsp. Schizaphis graminum (strain Sg).